The sequence spans 55 residues: Large ribosomal subunit protein bL33 (55 aa).

Belongs to the bacterial ribosomal protein bL33 family.

This Aliivibrio fischeri (strain ATCC 700601 / ES114) (Vibrio fischeri) protein is Large ribosomal subunit protein bL33.